A 204-amino-acid polypeptide reads, in one-letter code: GTP cyclohydrolase 1 (204 aa).

Cysteine 93, histidine 96, and cysteine 164 together coordinate Zn(2+).

It belongs to the GTP cyclohydrolase I family. Toroid-shaped homodecamer, composed of two pentamers of five dimers.

It carries out the reaction GTP + H2O = 7,8-dihydroneopterin 3'-triphosphate + formate + H(+). Its pathway is cofactor biosynthesis; 7,8-dihydroneopterin triphosphate biosynthesis; 7,8-dihydroneopterin triphosphate from GTP: step 1/1. The polypeptide is GTP cyclohydrolase 1 (Rhizobium meliloti (strain 1021) (Ensifer meliloti)).